Consider the following 1036-residue polypeptide: uncharacterized protein (1036 aa).

Positions 1–24 (MKRVGLIGVIMAALLVISATPVMA) are cleaved as a signal peptide. Residues 1011 to 1033 (GGGVPGFEAVFAIAGLLAVAYLL) form a helical membrane-spanning segment.

The protein localises to the membrane. This is an uncharacterized protein from Archaeoglobus fulgidus (strain ATCC 49558 / DSM 4304 / JCM 9628 / NBRC 100126 / VC-16).